Consider the following 391-residue polypeptide: 3-ketoacyl-CoA thiolase (391 aa).

The active-site Acyl-thioester intermediate is Cys95. Active-site proton acceptor residues include His347 and Cys377.

It belongs to the thiolase-like superfamily. Thiolase family. In terms of assembly, heterotetramer of two alpha chains (FadB) and two beta chains (FadA).

It localises to the cytoplasm. It carries out the reaction an acyl-CoA + acetyl-CoA = a 3-oxoacyl-CoA + CoA. It functions in the pathway lipid metabolism; fatty acid beta-oxidation. In terms of biological role, catalyzes the final step of fatty acid oxidation in which acetyl-CoA is released and the CoA ester of a fatty acid two carbons shorter is formed. This is 3-ketoacyl-CoA thiolase from Pseudomonas entomophila (strain L48).